A 468-amino-acid polypeptide reads, in one-letter code: Aspartate ammonia-lyase (468 aa).

5 residues coordinate L-aspartate: Thr99, Ser138, Thr139, Asn140, and Thr185. An SS loop region spans residues 315–324; the sequence is GSSIMPGKVN. Ser316 (proton acceptor) is an active-site residue. Positions 317 and 322 each coordinate L-aspartate.

Belongs to the class-II fumarase/aspartase family. Aspartase subfamily. As to quaternary structure, homotetramer.

It catalyses the reaction L-aspartate = fumarate + NH4(+). In terms of biological role, catalyzes the reversible conversion of L-aspartate to fumarate and ammonia. This Helicobacter pylori (strain J99 / ATCC 700824) (Campylobacter pylori J99) protein is Aspartate ammonia-lyase (aspA).